The primary structure comprises 489 residues: Protein P7 (489 aa).

RNA-binding stretches follow at residues 129 to 251 (TSLI…GRML) and 321 to 351 (AGDY…FQVN).

The protein belongs to the phytoreovirus protein P7 family.

The protein localises to the virion. Its subcellular location is the host cytoplasm. Its function is as follows. Probable component of the transcriptional machinery present in the inner capsid. Displays dsRNA binding activity and may play an important role in the sorting of viral RNA and virion assembly. Together with the RNA-directed RNA polymerase P1 and capping enzyme P5, forms an transcriptional complex positioned near the channels situated at each of the five-fold vertices of the core. This is Protein P7 from Rice gall dwarf virus (RGDV).